The sequence spans 459 residues: Periodic tryptophan protein 1 homolog (459 aa).

Positions 44–84 (GDTQQELDEESDDDAEEGENAEEDQNDMDVDDHADANSENR) are disordered. Over residues 48-73 (QELDEESDDDAEEGENAEEDQNDMDV) the composition is skewed to acidic residues. Positions 74 to 84 (DDHADANSENR) are enriched in basic and acidic residues. WD repeat units follow at residues 168–214 (LLPS…AIEP), 232–272 (GHKD…PHTT), 275–315 (AFGK…GVNS), 321–361 (KVDG…QLLW), and 365–405 (AHNE…AKHV). Position 385 is a phosphoserine (Ser385).

It belongs to the WD repeat PWP1 family. As to quaternary structure, interacts with Mybbp1A. Phosphorylated in response to nutrient-activated TORC1 signaling. In terms of tissue distribution, detected in the germline of adult testis and ovary (at protein level). Detected in ovary somatic cells, in zfh1-positive cyst cells in the testis and absent in differentiated cyst cells (at protein level).

Its subcellular location is the nucleus. The protein resides in the nucleolus. The protein localises to the chromosome. It localises to the nucleoplasm. In terms of biological role, chromatin-associated factor that regulates transcription. Regulates Pol I-mediated rRNA biogenesis and, probably, Pol III-mediated transcription. Regulates the localization to the nucleolus of Cdk7, a regulator of the Pol I-elongation factor TFIIH. Acts as a regulator of cell proliferation and tissue growth as part of the TORC1 and Myc signaling pathway in response to nutrients. Required in males for both germline stem cell (GSC) maintenance and early stages of germ cell differentiation of germ cell cysts. Not required for female germline stem cell (GSC) maintenance, but necessary to regulate germ cell differentiation and egg chamber development. In female somatic cells, required for follicle stem cell survival and maintenance. This chain is Periodic tryptophan protein 1 homolog, found in Drosophila melanogaster (Fruit fly).